We begin with the raw amino-acid sequence, 513 residues long: Fumarate reductase (513 aa).

Residue 41-55 participates in FAD binding; the sequence is AIVIGGGLAGLSATN. A Phosphoserine modification is found at Ser100. Residues His288 and Arg311 contribute to the active site.

The protein belongs to the FAD-dependent oxidoreductase 2 family. FRD/SDH subfamily. The cofactor is FAD.

It localises to the cytoplasm. Its subcellular location is the mitochondrion. It is found in the nucleus. The catalysed reaction is succinate + NAD(+) = fumarate + NADH + H(+). Irreversibly catalyzes the reduction of fumarate to succinate. The sequence is that of Fumarate reductase (osm1) from Schizosaccharomyces pombe (strain 972 / ATCC 24843) (Fission yeast).